Reading from the N-terminus, the 94-residue chain is Putative septation protein SpoVG (94 aa).

It belongs to the SpoVG family.

In terms of biological role, could be involved in septation. The sequence is that of Putative septation protein SpoVG from Acetivibrio thermocellus (strain ATCC 27405 / DSM 1237 / JCM 9322 / NBRC 103400 / NCIMB 10682 / NRRL B-4536 / VPI 7372) (Clostridium thermocellum).